The following is a 103-amino-acid chain: Large ribosomal subunit protein bL21 (103 aa).

It belongs to the bacterial ribosomal protein bL21 family. As to quaternary structure, part of the 50S ribosomal subunit. Contacts protein L20.

This protein binds to 23S rRNA in the presence of protein L20. The sequence is that of Large ribosomal subunit protein bL21 from Shewanella putrefaciens (strain CN-32 / ATCC BAA-453).